Here is a 403-residue protein sequence, read N- to C-terminus: Phosphoglycerate kinase (403 aa).

Substrate-binding positions include 21 to 23 (DFN), Arg36, 59 to 62 (HLGR), Arg119, and Arg159. ATP contacts are provided by residues Lys214, Gly301, Glu332, and 359-362 (GGDS).

The protein belongs to the phosphoglycerate kinase family. Monomer.

The protein resides in the cytoplasm. The catalysed reaction is (2R)-3-phosphoglycerate + ATP = (2R)-3-phospho-glyceroyl phosphate + ADP. The protein operates within carbohydrate degradation; glycolysis; pyruvate from D-glyceraldehyde 3-phosphate: step 2/5. This chain is Phosphoglycerate kinase, found in Lactobacillus johnsonii (strain CNCM I-12250 / La1 / NCC 533).